The chain runs to 313 residues: Solute carrier family 35 member E3 (313 aa).

Transmembrane regions (helical) follow at residues Ile-14 to Trp-34, Gly-40 to Ile-60, Ile-77 to Ser-97, Ile-100 to Tyr-122, Ile-130 to Tyr-146, Leu-153 to Val-173, Leu-187 to Glu-207, Ile-215 to Phe-235, Thr-252 to Phe-272, and Pro-275 to Thr-295.

The protein belongs to the TPT transporter family. SLC35E subfamily.

It is found in the membrane. Its function is as follows. Putative transporter. The chain is Solute carrier family 35 member E3 (slc35e3) from Danio rerio (Zebrafish).